A 107-amino-acid polypeptide reads, in one-letter code: Heme-degrading monooxygenase (107 aa).

Residues 2-93 form the ABM domain; the sequence is VIVANKTLIR…DYILGNEIEF (92 aa). Residue asparagine 6 participates in Fe cation binding. Histidine 76 is a heme binding site.

Belongs to the antibiotic biosynthesis monooxygenase family. Heme-degrading monooxygenase IsdG subfamily. As to quaternary structure, homodimer.

It localises to the cytoplasm. It carries out the reaction heme b + 3 reduced [NADPH--hemoprotein reductase] + 3 O2 = biliverdin IXalpha + CO + Fe(2+) + 3 oxidized [NADPH--hemoprotein reductase] + 3 H2O + H(+). Allows bacterial pathogens to use the host heme as an iron source. Catalyzes the oxidative degradation of the heme macrocyclic porphyrin ring to the biliverdin in the presence of a suitable electron donor such as ascorbate or NADPH--cytochrome P450 reductase, with subsequent release of free iron. This is Heme-degrading monooxygenase from Shouchella clausii (strain KSM-K16) (Alkalihalobacillus clausii).